A 294-amino-acid chain; its full sequence is Golgi phosphoprotein 3 homolog sauron (294 aa).

The segment at 1–52 (MNRSDGLVRRSVKPRENGGAEGGLNANTPDDNQDALDNLKDQEDNIDDGDSK) is disordered. Residues 37–52 (DNLKDQEDNIDDGDSK) are compositionally biased toward basic and acidic residues. A 1,2-diacyl-sn-glycero-3-phospho-(1D-myo-inositol 4-phosphate)-binding residues include Trp77, Arg86, Lys167, and Arg170. The tract at residues 186–197 (EKQNFLLFDMTT) is beta-hairpin required for oligomerization.

It belongs to the GOLPH3/VPS74 family. As to quaternary structure, homooligomer. Interacts with botv, Ext2 and ttv. Interacts with Vti1. Interacts with Vps35, Rab5, Chc, Rab11, zip, Pav and Septin1.

The protein localises to the golgi apparatus membrane. The protein resides in the cytoplasmic vesicle. It is found in the cleavage furrow. In terms of biological role, phosphatidylinositol-4-phosphate-binding protein that links Golgi membranes to the cytoskeleton and may participate in the tensile force required for vesicle budding from the Golgi. Thereby, may play a role in Golgi membrane trafficking and could indirectly give its flattened shape to the Golgi apparatus. May also bind to the coatomer to regulate Golgi membrane trafficking. May play a role in anterograde transport from the Golgi to the plasma membrane and regulate secretion. Also involved in the control of the localization of Golgi enzymes through interaction with their cytoplasmic part. Functions in cytokinesis by regulating contractile ring formation and vesicle trafficking during cleavage furrow ingression. May also have a role in the intital steps of central spindle formation. Can also bind phosphatidylinositol-3-phosphate and phosphatidylinositol-5-phosphate in vitro. The chain is Golgi phosphoprotein 3 homolog sauron from Drosophila melanogaster (Fruit fly).